A 243-amino-acid polypeptide reads, in one-letter code: Protein GIGAS CELL1 (243 aa).

In terms of assembly, interacts with APC/C activators such as FZR1, FZR2, FZR3, CDC20.1 and CDC20.5. In terms of processing, phosphorylated by CDKA-1 in complex with CYCA1-2. In terms of tissue distribution, expressed in rapidly dividing tissues such as shoot apical meristem and young leaves. Associated with cell division but also with specific cell types.

Negative regulator of the anaphase-promoting complex/cyclosome (APC/C) ubiquitin ligase required for proper mitotic and meiotic progression and cell fate determination. Involved in entry into both meiosis I and meiosis II. Prevents endomitosis by preferentially inhibiting APC/C(CDC20). Required for megagametophyte and endosperm development. Triggers mitotic cyclins (e.g. CYCB1-1 and CYCB1-2) accumulation. Confers immunity to bacterial pathogens (e.g. Pseudomonas syringae pv. tomato DC3000), which is associated with increased expression of disease resistance (R) genes. GIG1 and PANS1 are part of a network linking centromere cohesion and cell cycle progression through control of APC/C activity. This chain is Protein GIGAS CELL1 (GIG1), found in Arabidopsis thaliana (Mouse-ear cress).